The chain runs to 374 residues: Flap endonuclease 1 (374 aa).

The N-domain stretch occupies residues 1 to 105; the sequence is MGVKGLNQLI…GELEKRMIRK (105 aa). Mg(2+) is bound at residue Asp-34. 2 residues coordinate DNA: Arg-47 and Arg-71. Mg(2+) is bound by residues Asp-87, Glu-159, Glu-161, Asp-180, and Asp-182. Residues 123-254 form an I-domain region; it reads EMVRYEKRSV…VTAFKLIKEH (132 aa). Glu-159 contributes to the DNA binding site. Residues Gly-232 and Asp-234 each contribute to the DNA site. Residue Asp-234 participates in Mg(2+) binding. The segment at 341–349 is interaction with PCNA; the sequence is VQGRLDGFF. Positions 354–365 are enriched in basic and acidic residues; that stretch reads TEKRKPEQDKKT. The interval 354 to 374 is disordered; that stretch reads TEKRKPEQDKKTKGSKKAKKK.

Belongs to the XPG/RAD2 endonuclease family. FEN1 subfamily. As to quaternary structure, interacts with PCNA. Three molecules of FEN1 bind to one PCNA trimer with each molecule binding to one PCNA monomer. PCNA stimulates the nuclease activity without altering cleavage specificity. It depends on Mg(2+) as a cofactor. Post-translationally, phosphorylated. Phosphorylation upon DNA damage induces relocalization to the nuclear plasma.

The protein resides in the nucleus. It is found in the nucleolus. Its subcellular location is the nucleoplasm. It localises to the mitochondrion. Functionally, structure-specific nuclease with 5'-flap endonuclease and 5'-3' exonuclease activities involved in DNA replication and repair. During DNA replication, cleaves the 5'-overhanging flap structure that is generated by displacement synthesis when DNA polymerase encounters the 5'-end of a downstream Okazaki fragment. It enters the flap from the 5'-end and then tracks to cleave the flap base, leaving a nick for ligation. Also involved in the long patch base excision repair (LP-BER) pathway, by cleaving within the apurinic/apyrimidinic (AP) site-terminated flap. Acts as a genome stabilization factor that prevents flaps from equilibrating into structures that lead to duplications and deletions. Also possesses 5'-3' exonuclease activity on nicked or gapped double-stranded DNA, and exhibits RNase H activity. Also involved in replication and repair of rDNA and in repairing mitochondrial DNA. In Meyerozyma guilliermondii (strain ATCC 6260 / CBS 566 / DSM 6381 / JCM 1539 / NBRC 10279 / NRRL Y-324) (Yeast), this protein is Flap endonuclease 1.